A 340-amino-acid polypeptide reads, in one-letter code: Guanine nucleotide-binding protein G(I)/G(S)/G(T) subunit beta-1 (340 aa).

WD repeat units lie at residues 53–83 (GHLAKIYAMHWGTDSRLLVSASQDGKLIIWD), 95–125 (LRSSWVMTCAYAPSGNYVACGGLDNICSIYN), 141–170 (GHTGYLSCCRFLDDNQIVTSSGDTTCALWD), 182–212 (GHTGDVMSLSLAPDTRLFVSGACDASAKLWD), 224–254 (GHESDINAICFFPNGNAFATGSDDATCRLFD), 268–298 (NIICGITSVAFSKSGRLLLAGYDDFNCNVWD), and 310–340 (GHDNRVSCLGVTDDGMAVATGSWDSFLKIWN).

It belongs to the WD repeat G protein beta family. G proteins are composed of 3 units, alpha, beta and gamma.

Functionally, guanine nucleotide-binding proteins (G proteins) are involved as a modulator or transducer in various transmembrane signaling systems. The beta and gamma chains are required for the GTPase activity, for replacement of GDP by GTP, and for G protein-effector interaction. In Danio rerio (Zebrafish), this protein is Guanine nucleotide-binding protein G(I)/G(S)/G(T) subunit beta-1 (gnb1).